The sequence spans 270 residues: tRNA pseudouridine synthase B (270 aa).

Asp49 functions as the Nucleophile in the catalytic mechanism.

Belongs to the pseudouridine synthase TruB family. Type 1 subfamily.

It carries out the reaction uridine(55) in tRNA = pseudouridine(55) in tRNA. In terms of biological role, responsible for synthesis of pseudouridine from uracil-55 in the psi GC loop of transfer RNAs. The chain is tRNA pseudouridine synthase B from Bartonella quintana (strain Toulouse) (Rochalimaea quintana).